The chain runs to 978 residues: Tyrosine-protein kinase transforming protein fms (978 aa).

The Extracellular portion of the chain corresponds to 1–543; the sequence is RMPSGPGHYG…IGAHTPLPDE (543 aa). Ig-like C2-type domains are found at residues 55-134, 141-231, 236-331, 333-431, and 434-533; these read PVIQ…IHLY, PWKV…KVQK, PATL…RVVE, AYSN…LTLR, and PEVR…WPIS. The cysteines at positions 76 and 118 are disulfide-linked. N-linked (GlcNAc...) asparagine; by host glycosylation is found at N79, N107, N128, N187, N309, N320, N336, N369, N444, N511, and N524. Disulfide bonds link C161–C211 and C258–C312. A disulfide bond links C451 and C516. Residues 544 to 568 traverse the membrane as a helical segment; it reads LLFTPVLLTCMSIMALLLLLLLLLL. Residues 569–978 lie on the Cytoplasmic side of the membrane; sequence YKYKQKPKYQ…PWQRTPPVAR (410 aa). One can recognise a Protein kinase domain in the interval 613–942; that stretch reads LQFGKTLGTG…PTFQQICSLL (330 aa). ATP-binding positions include 619–627 and K647; that span reads LGTGAFGKV. The active-site Proton acceptor is the D810. At Y841 the chain carries Phosphotyrosine; by autocatalysis. A disordered region spans residues 952-978; sequence VPNYTNLPSSSSSRLLRPWQRTPPVAR. Residues 958-969 show a composition bias toward low complexity; that stretch reads LPSSSSSRLLRP. T973 is subject to Phosphothreonine.

It belongs to the protein kinase superfamily. Tyr protein kinase family. CSF-1/PDGF receptor subfamily.

It localises to the membrane. It catalyses the reaction L-tyrosyl-[protein] + ATP = O-phospho-L-tyrosyl-[protein] + ADP + H(+). Functionally, truncated version of the receptor for colony-stimulating factor 1 (CSF-1). This chain is Tyrosine-protein kinase transforming protein fms (V-FMS), found in Felidae (cat family).